An 841-amino-acid chain; its full sequence is Chitin synthase 1 (841 aa).

A compositionally biased stretch (basic and acidic residues) spans M1 to P13. The segment at M1 to R98 is disordered. Positions P76–P85 are enriched in pro residues. 9 helical membrane-spanning segments follow: residues W302 to G322, S385 to L405, L526 to A546, I564 to A584, F602 to V622, N644 to F664, F673 to C693, V778 to L798, and L816 to F836.

The protein belongs to the chitin synthase family.

The protein localises to the cell membrane. It carries out the reaction [(1-&gt;4)-N-acetyl-beta-D-glucosaminyl](n) + UDP-N-acetyl-alpha-D-glucosamine = [(1-&gt;4)-N-acetyl-beta-D-glucosaminyl](n+1) + UDP + H(+). Polymerizes chitin, a structural polymer of the cell wall and septum, by transferring the sugar moiety of UDP-GlcNAc to the non-reducing end of the growing chitin polymer. This is Chitin synthase 1 (chs1) from Phycomyces blakesleeanus (strain ATCC 8743b / DSM 1359 / FGSC 10004 / NBRC 33097 / NRRL 1555).